The sequence spans 173 residues: Alpha-crystallin A chain (173 aa).

N-acetylmethionine is present on Met-1. Residues 1–63 (MDIAIQHPWF…RTVLDSGISE (63 aa)) are required for complex formation with BFSP1 and BFSP2. Gln-6 bears the Deamidated glutamine; partial mark. Ser-45 is subject to Phosphoserine. Residue Gln-50 is modified to Deamidated glutamine; partial. Residues 52–162 (LFRTVLDSGI…GHSERAIPVS (111 aa)) enclose the sHSP domain. The residue at position 70 (Lys-70) is an N6-acetyllysine. A Deamidated glutamine; partial modification is found at Gln-90. Lys-99 bears the N6-acetyllysine mark. Position 100 (His-100) interacts with Zn(2+). Asn-101 bears the Deamidated asparagine; partial mark. Residues Glu-102 and His-107 each contribute to the Zn(2+) site. Position 122 is a phosphoserine (Ser-122). Position 123 is a deamidated asparagine; partial (Asn-123). A disordered region spans residues 144–173 (PKIPSGVDAGHSERAIPVSREEKPSSAPSS). Residues 153 to 167 (GHSERAIPVSREEKP) show a composition bias toward basic and acidic residues. His-154 lines the Zn(2+) pocket. O-linked (GlcNAc) serine glycosylation occurs at Ser-162.

Belongs to the small heat shock protein (HSP20) family. Heteromer composed of three CRYAA and one CRYAB subunits. Inter-subunit bridging via zinc ions enhances stability, which is crucial as there is no protein turn over in the lens. Can also form homodimers and homotetramers (dimers of dimers) which serve as the building blocks of homooligomers. Within homooligomers, the zinc-binding motif is created from residues of 3 different molecules. His-100 and Glu-102 from one molecule are ligands of the zinc ion, and His-107 and His-154 residues from additional molecules complete the site with tetrahedral coordination geometry. Part of a complex required for lens intermediate filament formation composed of BFSP1, BFSP2 and CRYAA. Acetylation at Lys-70 may increase chaperone activity. In terms of processing, undergoes age-dependent proteolytical cleavage at the C-terminus.

The protein localises to the cytoplasm. The protein resides in the nucleus. In terms of biological role, contributes to the transparency and refractive index of the lens. Acts as a chaperone, preventing aggregation of various proteins under a wide range of stress conditions. Required for the correct formation of lens intermediate filaments as part of a complex composed of BFSP1, BFSP2 and CRYAA. This Giraffa camelopardalis (Giraffe) protein is Alpha-crystallin A chain (CRYAA).